The sequence spans 407 residues: UDP-N-acetyl-D-mannosamine dehydrogenase (407 aa).

The protein belongs to the UDP-glucose/GDP-mannose dehydrogenase family.

The enzyme catalyses UDP-N-acetyl-alpha-D-mannosamine + 2 NAD(+) + H2O = UDP-N-acetyl-alpha-D-mannosaminouronate + 2 NADH + 3 H(+). It participates in capsule biogenesis; capsule polysaccharide biosynthesis. In terms of biological role, dehydrogenase involved in the biosynthesis of capsular polysaccharides. Catalyzes the NAD(+)-dependent oxidation of UDP-N-acetyl-D-mannosamine (UDP-ManNAc) to UDP-N-acetyl-D-mannosaminuronic acid (UDP-ManNAcA). This Campylobacter jejuni protein is UDP-N-acetyl-D-mannosamine dehydrogenase.